We begin with the raw amino-acid sequence, 985 residues long: Bifunctional glutamine synthetase adenylyltransferase/adenylyl-removing enzyme (985 aa).

An adenylyl removase region spans residues 1–460 (MSLPSLADFP…HFRQVIADPD (460 aa)). Positions 476-985 (GGEWLPLWEE…MRIWAQMGLS (510 aa)) are adenylyl transferase.

This sequence belongs to the GlnE family. Mg(2+) serves as cofactor.

It catalyses the reaction [glutamine synthetase]-O(4)-(5'-adenylyl)-L-tyrosine + phosphate = [glutamine synthetase]-L-tyrosine + ADP. The enzyme catalyses [glutamine synthetase]-L-tyrosine + ATP = [glutamine synthetase]-O(4)-(5'-adenylyl)-L-tyrosine + diphosphate. Functionally, involved in the regulation of glutamine synthetase GlnA, a key enzyme in the process to assimilate ammonia. When cellular nitrogen levels are high, the C-terminal adenylyl transferase (AT) inactivates GlnA by covalent transfer of an adenylyl group from ATP to specific tyrosine residue of GlnA, thus reducing its activity. Conversely, when nitrogen levels are low, the N-terminal adenylyl removase (AR) activates GlnA by removing the adenylyl group by phosphorolysis, increasing its activity. The regulatory region of GlnE binds the signal transduction protein PII (GlnB) which indicates the nitrogen status of the cell. The protein is Bifunctional glutamine synthetase adenylyltransferase/adenylyl-removing enzyme of Pseudomonas syringae pv. tomato (strain ATCC BAA-871 / DC3000).